Reading from the N-terminus, the 456-residue chain is MANAVGRRSWAALRLCAAVILLDLAVCKGFVEDLNESFKDNRKDDIWLVDFYAPWCGHCKKLEPIWNEVGLEMKSIGSPVKVGKMDATSYSSIASEFGVRGYPTIKLLKGDLAYNYRGPRTKDDIIEFAHRVSGALIRPLPSQQMFDHVRKRHRVFFVYIGGESPLKEKYIDAASELIVYTYFFSASEDVVPEYVTLKEMPAVLVFKDDTYFVYDEYEDGDLSSWISRERFQNYLTMDGFLLYELGDTGKLVAIAVIDEKNTSLEHTRLKSIIQEVARDFRDHFHRDFQFGHMDGNDYINTLLMDELTVPTIVVLNTSNQQYFLLDRHIKDASDMVQFINSILDGTVPAQGGDSIFQRLKRIVFDAKSTIVSIFKSSPLMGCFLFGLPLGVISIMCYGIYTADTDGGYIEERYEVSKSEMENQEQIEESKEQESSSGGSLAPTVQEPKDVLEKKKD.

The first 29 residues, 1 to 29 (MANAVGRRSWAALRLCAAVILLDLAVCKG), serve as a signal peptide directing secretion. Residues 30–131 (FVEDLNESFK…KDDIIEFAHR (102 aa)) form the Thioredoxin domain. The Lumenal portion of the chain corresponds to 30-378 (FVEDLNESFK…TIVSIFKSSP (349 aa)). Asn35 carries N-linked (GlcNAc...) asparagine glycosylation. Residues Cys56 and Cys59 each act as nucleophile in the active site. Cysteines 56 and 59 form a disulfide. Asn261 and Asn316 each carry an N-linked (GlcNAc...) asparagine glycan. A helical transmembrane segment spans residues 379-399 (LMGCFLFGLPLGVISIMCYGI). At 400–456 (YTADTDGGYIEERYEVSKSEMENQEQIEESKEQESSSGGSLAPTVQEPKDVLEKKKD) the chain is on the cytoplasmic side. The interval 416–456 (SKSEMENQEQIEESKEQESSSGGSLAPTVQEPKDVLEKKKD) is disordered. Positions 446–456 (EPKDVLEKKKD) are enriched in basic and acidic residues. A Di-lysine motif motif is present at residues 453 to 456 (KKKD).

The protein belongs to the protein disulfide isomerase family.

It localises to the endoplasmic reticulum membrane. It catalyses the reaction Catalyzes the rearrangement of -S-S- bonds in proteins.. Its function is as follows. Probable disulfide isomerase, which participates in the folding of proteins containing disulfide bonds. May act as a dithiol oxidase. Acts as a regulator of endoplasmic reticulum-mitochondria contact sites via its ability to regulate redox signals. The protein is Protein disulfide-isomerase TMX3 (Tmx3) of Mus musculus (Mouse).